We begin with the raw amino-acid sequence, 812 residues long: Probable inorganic carbon transporter subunit DabA (812 aa).

Zn(2+) is bound by residues C339, D341, H501, and C516.

It belongs to the inorganic carbon transporter (TC 9.A.2) DabA family. As to quaternary structure, forms a complex with DabB. It depends on Zn(2+) as a cofactor.

The protein resides in the cell inner membrane. Functionally, part of an energy-coupled inorganic carbon pump. The chain is Probable inorganic carbon transporter subunit DabA from Xanthomonas axonopodis pv. citri (strain 306).